Consider the following 457-residue polypeptide: Bifunctional protein GlmU (457 aa).

A pyrophosphorylase region spans residues 1 to 230 (MSKRYAVVLA…FEESLGVNDR (230 aa)). Residues 9 to 12 (LAAG), lysine 23, glutamine 73, and 78 to 79 (GT) contribute to the UDP-N-acetyl-alpha-D-glucosamine site. Aspartate 103 serves as a coordination point for Mg(2+). UDP-N-acetyl-alpha-D-glucosamine contacts are provided by glycine 140, glutamate 155, asparagine 170, and asparagine 228. Residue asparagine 228 participates in Mg(2+) binding. The segment at 231 to 251 (IALAEASKLMQRRINENHMRN) is linker. The interval 252–457 (GVTLVNPEST…GYAKHLNHGK (206 aa)) is N-acetyltransferase. Residues arginine 333 and lysine 351 each coordinate UDP-N-acetyl-alpha-D-glucosamine. Histidine 363 serves as the catalytic Proton acceptor. UDP-N-acetyl-alpha-D-glucosamine is bound by residues tyrosine 366 and asparagine 377. Residues 386–387 (NY), alanine 423, and arginine 440 each bind acetyl-CoA.

In the N-terminal section; belongs to the N-acetylglucosamine-1-phosphate uridyltransferase family. It in the C-terminal section; belongs to the transferase hexapeptide repeat family. As to quaternary structure, homotrimer. Mg(2+) serves as cofactor.

The protein resides in the cytoplasm. It catalyses the reaction alpha-D-glucosamine 1-phosphate + acetyl-CoA = N-acetyl-alpha-D-glucosamine 1-phosphate + CoA + H(+). The enzyme catalyses N-acetyl-alpha-D-glucosamine 1-phosphate + UTP + H(+) = UDP-N-acetyl-alpha-D-glucosamine + diphosphate. The protein operates within nucleotide-sugar biosynthesis; UDP-N-acetyl-alpha-D-glucosamine biosynthesis; N-acetyl-alpha-D-glucosamine 1-phosphate from alpha-D-glucosamine 6-phosphate (route II): step 2/2. It participates in nucleotide-sugar biosynthesis; UDP-N-acetyl-alpha-D-glucosamine biosynthesis; UDP-N-acetyl-alpha-D-glucosamine from N-acetyl-alpha-D-glucosamine 1-phosphate: step 1/1. Its pathway is bacterial outer membrane biogenesis; LPS lipid A biosynthesis. Functionally, catalyzes the last two sequential reactions in the de novo biosynthetic pathway for UDP-N-acetylglucosamine (UDP-GlcNAc). The C-terminal domain catalyzes the transfer of acetyl group from acetyl coenzyme A to glucosamine-1-phosphate (GlcN-1-P) to produce N-acetylglucosamine-1-phosphate (GlcNAc-1-P), which is converted into UDP-GlcNAc by the transfer of uridine 5-monophosphate (from uridine 5-triphosphate), a reaction catalyzed by the N-terminal domain. The polypeptide is Bifunctional protein GlmU (Listeria monocytogenes serotype 4a (strain HCC23)).